The chain runs to 259 residues: Imidazole glycerol phosphate synthase subunit HisF (259 aa).

Residues aspartate 11 and aspartate 130 contribute to the active site.

This sequence belongs to the HisA/HisF family. In terms of assembly, heterodimer of HisH and HisF.

The protein resides in the cytoplasm. It catalyses the reaction 5-[(5-phospho-1-deoxy-D-ribulos-1-ylimino)methylamino]-1-(5-phospho-beta-D-ribosyl)imidazole-4-carboxamide + L-glutamine = D-erythro-1-(imidazol-4-yl)glycerol 3-phosphate + 5-amino-1-(5-phospho-beta-D-ribosyl)imidazole-4-carboxamide + L-glutamate + H(+). The protein operates within amino-acid biosynthesis; L-histidine biosynthesis; L-histidine from 5-phospho-alpha-D-ribose 1-diphosphate: step 5/9. IGPS catalyzes the conversion of PRFAR and glutamine to IGP, AICAR and glutamate. The HisF subunit catalyzes the cyclization activity that produces IGP and AICAR from PRFAR using the ammonia provided by the HisH subunit. The polypeptide is Imidazole glycerol phosphate synthase subunit HisF (Desulforapulum autotrophicum (strain ATCC 43914 / DSM 3382 / VKM B-1955 / HRM2) (Desulfobacterium autotrophicum)).